The primary structure comprises 304 residues: Fructose permease IIC component (304 aa).

Positions 1-304 (IHSADPKDPT…GIIKKPVEEK (304 aa)) constitute a PTS EIIC type-2 domain. 8 helical membrane-spanning segments follow: residues 20 to 40 (FIGSDNALKLIVAVLAGFIAM), 62 to 82 (NAGFLGGLIAGFLAGYVVILL), 98 to 118 (PVLIYPLLGIFITGVLMQFVI), 140 to 160 (NLVLMGIILGGMMAIDMGGPL), 181 to 201 (AAIMAGGMVPPLGIALATTFF), 214 to 234 (ITCYFMGAAFVTEGAIPFAAA), 238 to 258 (VIPAAVIGSAVAGGLTEFFRV), and 277 to 297 (LLYLLSIVIGAIVTAVILGII).

The protein resides in the cell membrane. The phosphoenolpyruvate-dependent sugar phosphotransferase system (PTS), a major carbohydrate active -transport system, catalyzes the phosphorylation of incoming sugar substrates concomitant with their translocation across the cell membrane. This system is involved in fructose transport. The sequence is that of Fructose permease IIC component (fruA) from Bacillus amyloliquefaciens (Bacillus velezensis).